We begin with the raw amino-acid sequence, 257 residues long: 3-deoxy-manno-octulosonate cytidylyltransferase (257 aa).

It belongs to the KdsB family.

It is found in the cytoplasm. The catalysed reaction is 3-deoxy-alpha-D-manno-oct-2-ulosonate + CTP = CMP-3-deoxy-beta-D-manno-octulosonate + diphosphate. It functions in the pathway nucleotide-sugar biosynthesis; CMP-3-deoxy-D-manno-octulosonate biosynthesis; CMP-3-deoxy-D-manno-octulosonate from 3-deoxy-D-manno-octulosonate and CTP: step 1/1. Its pathway is bacterial outer membrane biogenesis; lipopolysaccharide biosynthesis. Activates KDO (a required 8-carbon sugar) for incorporation into bacterial lipopolysaccharide in Gram-negative bacteria. The sequence is that of 3-deoxy-manno-octulosonate cytidylyltransferase from Stenotrophomonas maltophilia (strain R551-3).